The following is a 274-amino-acid chain: Thiamine kinase (274 aa).

It belongs to the thiamine kinase family.

The enzyme catalyses thiamine + ATP = thiamine phosphate + ADP + H(+). It functions in the pathway cofactor biosynthesis; thiamine diphosphate biosynthesis; thiamine phosphate from thiamine: step 1/1. In terms of biological role, catalyzes the ATP-dependent phosphorylation of thiamine to thiamine phosphate. Is involved in thiamine salvage. This Escherichia coli O6:K15:H31 (strain 536 / UPEC) protein is Thiamine kinase.